Reading from the N-terminus, the 267-residue chain is Small ribosomal subunit protein uS2 (267 aa).

The segment at 237 to 267 is disordered; sequence IGESAAAPSEPALETASAEATAEGEQPGSQA. Over residues 238–261 the composition is skewed to low complexity; that stretch reads GESAAAPSEPALETASAEATAEGE.

It belongs to the universal ribosomal protein uS2 family.

This Chelativorans sp. (strain BNC1) protein is Small ribosomal subunit protein uS2.